A 467-amino-acid polypeptide reads, in one-letter code: Chromosomal replication initiator protein DnaA (467 aa).

The tract at residues 1 to 90 is domain I, interacts with DnaA modulators; sequence MSLSLWQQCL…KSVTQTPQAA (90 aa). The interval 91-130 is domain II; it reads VTSNVAAPAQVAQTQPQRAAPSTRSGWDNVPAPAEPTYRS. Over residues 97 to 111 the composition is skewed to low complexity; the sequence is APAQVAQTQPQRAAP. The interval 97 to 119 is disordered; the sequence is APAQVAQTQPQRAAPSTRSGWDN. Positions 131-347 are domain III, AAA+ region; it reads NVNVKHTFDN…GALNRVIANA (217 aa). The ATP site is built by glycine 175, glycine 177, lysine 178, and threonine 179. Positions 348 to 467 are domain IV, binds dsDNA; that stretch reads NFTGRAITID…FSNLIRTLSS (120 aa).

This sequence belongs to the DnaA family. As to quaternary structure, oligomerizes as a right-handed, spiral filament on DNA at oriC.

It localises to the cytoplasm. Functionally, plays an essential role in the initiation and regulation of chromosomal replication. ATP-DnaA binds to the origin of replication (oriC) to initiate formation of the DNA replication initiation complex once per cell cycle. Binds the DnaA box (a 9 base pair repeat at the origin) and separates the double-stranded (ds)DNA. Forms a right-handed helical filament on oriC DNA; dsDNA binds to the exterior of the filament while single-stranded (ss)DNA is stabiized in the filament's interior. The ATP-DnaA-oriC complex binds and stabilizes one strand of the AT-rich DNA unwinding element (DUE), permitting loading of DNA polymerase. After initiation quickly degrades to an ADP-DnaA complex that is not apt for DNA replication. Binds acidic phospholipids. This is Chromosomal replication initiator protein DnaA from Escherichia coli O157:H7.